The primary structure comprises 358 residues: Photosystem II protein D1 (358 aa).

3 helical membrane-spanning segments follow: residues 28 to 45 (YVGW…AAAI), 117 to 132 (HFLI…QWEL), and 141 to 155 (WICV…AAFA). His117 lines the chlorophyll a pocket. A pheophytin a-binding site is contributed by Trp125. [CaMn4O5] cluster contacts are provided by Asp169 and Glu188. The chain crosses the membrane as a helical span at residues 196–217 (FHMIGVAGMFGGSLFSAMHGSL). His197 is a binding site for chlorophyll a. Residues His214 and 263-264 (SF) contribute to the a quinone site. Position 214 (His214) interacts with Fe cation. Residue His271 coordinates Fe cation. The chain crosses the membrane as a helical span at residues 273–287 (FLAAWPVICIWITSL). 4 residues coordinate [CaMn4O5] cluster: His331, Glu332, Asp341, and Ala343. Residues 344–358 (AAESTPVALIAPAIG) constitute a propeptide that is removed on maturation.

It belongs to the reaction center PufL/M/PsbA/D family. As to quaternary structure, PSII is composed of 1 copy each of membrane proteins PsbA, PsbB, PsbC, PsbD, PsbE, PsbF, PsbH, PsbI, PsbJ, PsbK, PsbL, PsbM, PsbT, PsbX, PsbY, Psb30/Ycf12, peripheral proteins PsbO, CyanoQ (PsbQ), PsbU, PsbV and a large number of cofactors. It forms dimeric complexes. Requires The D1/D2 heterodimer binds P680, chlorophylls that are the primary electron donor of PSII, and subsequent electron acceptors. It shares a non-heme iron and each subunit binds pheophytin, quinone, additional chlorophylls, carotenoids and lipids. D1 provides most of the ligands for the Mn4-Ca-O5 cluster of the oxygen-evolving complex (OEC). There is also a Cl(-1) ion associated with D1 and D2, which is required for oxygen evolution. The PSII complex binds additional chlorophylls, carotenoids and specific lipids. as cofactor. Post-translationally, tyr-160 forms a radical intermediate that is referred to as redox-active TyrZ, YZ or Y-Z. C-terminally processed by CtpA; processing is essential to allow assembly of the oxygen-evolving complex and thus photosynthetic growth.

Its subcellular location is the cellular thylakoid membrane. The enzyme catalyses 2 a plastoquinone + 4 hnu + 2 H2O = 2 a plastoquinol + O2. In terms of biological role, photosystem II (PSII) is a light-driven water:plastoquinone oxidoreductase that uses light energy to abstract electrons from H(2)O, generating O(2) and a proton gradient subsequently used for ATP formation. It consists of a core antenna complex that captures photons, and an electron transfer chain that converts photonic excitation into a charge separation. The D1/D2 (PsbA/PsbD) reaction center heterodimer binds P680, the primary electron donor of PSII as well as several subsequent electron acceptors. The protein is Photosystem II protein D1 of Prochlorococcus marinus (strain MIT 9313).